The following is a 1400-amino-acid chain: MNQEIMNLFNPTTPAQVFDQIRISIASPEKILSWSYGEIKKPETINYRTFKPERDGLFCARIFGPIKDYECLCGKYKRMKYKGIICEKCSVEVTLSRVRRERMGHIELAAPVAHIWFLKSLPSRIGQLLDMTLKDLERILYFEYYVVLEPGLTDLKERQLLSEEEYLRAQDQYGQDSFTAMIGAEAIRELLKGLELEKIDAQLRVEMAETDSDIKHKKLAKRLKIVEAFRFSGNKPEWMILTVVPVIPPDLRPLVPLDGGRFATSDLNDLYRRVINRNNRLKRLMELRAPDIIIRNEKRMLQEAVDALFDNGRRGRVITGANKRPLKSLADMLKGKQGRFRQNLLGKRVDYSGRSVIVVGPELKLHQCGLPKKMALELFKPFIYSRLDAKGLSTTVKQAKKLVEKERPEVWDILDEVIREHPVLLNRAPTLHRLGIQAFEPVLIEGKAIQLHPLVCAAFNADFDGDQMAVHVPLSLEAQLEARVLMMSTNNILHPANGQPIIVPSQDIVLGLYYLSILREGLPGEGKVFGDLAELEHALFSKVIHLHTKIKYRWDSLDDEGKPYQRLIETTAGRILLGQVLPKSVKLPFEVINKLMTKREISSVIDQVYRHCGQKETVIFCDRIMALGFFNAFKAGISFGKDDMVVPASKWKIVDTTRTLAKDFEQQYNDGLITHGEKYNKVVDAWSKATEEIAKEMMKEISAVRKNASGAETQVNSIYMMAHSGARGSPAQMRQLAGMRGLMAKPSGEIIETPIISNFKEGLSVLEYFNSTHGARKGLADTALKTANSGYLTRRLVDVAQDCIITQDDCGTSLGIKMRAIIDAGTVVASLGSRILGRTAGEDVRDPQTNEVIVKKGQLMEERDVEAIHQAGVQEVKIRSALTCELVNGICGKCYGRDLARGTPVNHGEAVGVIAAQSIGEPGTQLTMRTFHIGGAAQINEQSVIESNFEGKVVIKNKAIARNGENHSVAMVRNMVVAIVDPDGTERATHRIQYGARMHVDEGDTVKRGQRIAEWDPYSRPVLTEVEGTIDFEDLVEDQSISETLDESTGIAKRIVIDWRSTRGGADLRPAIVVKGKDGKVLKLARGGDARYMLSVDAILSVDVGAKVKPGDILARISTESAKTRDITGGLPRVAELFEARKPKDAAIIAEIAGTIRFGRDYKNKRRISIEPMDSEEEAREYLIPKGKHIHLQDGDIVEKGDFIVEGNPAPHDILAIKGIEELAAYLVNEIQEVYRLQGVLINDKHIEVIVRQMLQKVEITDQGETDMISGEQIDKIEFDQLNAKARDEGKKIATGTPVLLGITKASLQTRSFFSAASFQETTRVLTEAAVNGKVDPLEGLKENVIVGRLIPAGTGASMAKLREVAMKRDRMILDEREKQATIVPPAAPEAEPLALPPVE.

Positions 71, 73, 86, and 89 each coordinate Zn(2+). Mg(2+)-binding residues include aspartate 462, aspartate 464, and aspartate 466. Cysteine 810, cysteine 884, cysteine 891, and cysteine 894 together coordinate Zn(2+). The segment at arginine 1377 to glutamate 1400 is disordered.

It belongs to the RNA polymerase beta' chain family. In terms of assembly, the RNAP catalytic core consists of 2 alpha, 1 beta, 1 beta' and 1 omega subunit. When a sigma factor is associated with the core the holoenzyme is formed, which can initiate transcription. The cofactor is Mg(2+). Zn(2+) is required as a cofactor.

The enzyme catalyses RNA(n) + a ribonucleoside 5'-triphosphate = RNA(n+1) + diphosphate. Its function is as follows. DNA-dependent RNA polymerase catalyzes the transcription of DNA into RNA using the four ribonucleoside triphosphates as substrates. This Rhodopseudomonas palustris (strain HaA2) protein is DNA-directed RNA polymerase subunit beta'.